The sequence spans 427 residues: Stabilizer of axonemal microtubules 4 (427 aa).

Disordered regions lie at residues 82–105 (TSKSVTSQSYSPLEVPDGKQPLPW), 273–298 (RTLNPRVPTPAPQPASMSHRSYQPPQ), and 314–335 (GNKEPTGFTLNNPSYVRSSYEQ). Polar residues-rich tracts occupy residues 287-298 (ASMSHRSYQPPQ) and 321-332 (FTLNNPSYVRSS).

Microtubule inner protein component of sperm flagellar doublet microtubules. Interacts with PPP1CA.

It is found in the cell projection. The protein localises to the cilium. The protein resides in the cytoplasm. Its subcellular location is the cytoskeleton. It localises to the flagellum axoneme. This Mus musculus (Mouse) protein is Stabilizer of axonemal microtubules 4.